Reading from the N-terminus, the 270-residue chain is Interleukin-33 (270 aa).

A homeodomain-like HTH domain region spans residues 1-65; it reads MKPKMKYSTN…EACYFRRETT (65 aa). The propeptide occupies 1–94; it reads MKPKMKYSTN…CQQQSTVESF (94 aa). The interaction with RELA stretch occupies residues 64 to 111; the sequence is TTKRPSLKTDRKHKRHLVLAACQQQSTVESFAFGISGVQKYTRALHDS.

This sequence belongs to the IL-1 family. Highly divergent. In terms of assembly, forms a 1:1:1 heterotrimeric complex with its primary high-affinity receptor IL1RL1 and the coreceptor IL1RAP. Interacts with cargo receptor TMED10; the interaction mediates the translocation from the cytoplasm into the ERGIC (endoplasmic reticulum-Golgi intermediate compartment) and thereby secretion. Post-translationally, the full-length protein can be released from cells and is able to signal via the IL1RL1/ST2 receptor. However, proteolytic processing by CELA1, CSTG/cathepsin G and ELANE/neutrophil elastase produces C-terminal peptides that are more active than the unprocessed full-length protein. May also be proteolytically processed by calpains. Proteolytic cleavage mediated by apoptotic caspases including CASP3 and CASP7 results in IL33 inactivation. In vitro proteolytic cleavage by CASP1 was reported but could not be confirmed in vivo suggesting that IL33 is probably not a direct substrate for that caspase.

Its subcellular location is the nucleus. The protein resides in the chromosome. The protein localises to the cytoplasm. It is found in the cytoplasmic vesicle. It localises to the secretory vesicle. Its subcellular location is the secreted. Its function is as follows. Cytokine that binds to and signals through the IL1RL1/ST2 receptor which in turn activates NF-kappa-B and MAPK signaling pathways in target cells. Involved in the maturation of Th2 cells inducing the secretion of T-helper type 2-associated cytokines. Also involved in activation of mast cells, basophils, eosinophils and natural killer cells. Acts as a chemoattractant for Th2 cells, and may function as an 'alarmin', that amplifies immune responses during tissue injury. Induces rapid UCP2-dependent mitochondrial rewiring that attenuates the generation of reactive oxygen species and preserves the integrity of Krebs cycle required for persistent production of itaconate and subsequent GATA3-dependent differentiation of inflammation-resolving alternatively activated macrophages. In quiescent endothelia the uncleaved form is constitutively and abundantly expressed, and acts as a chromatin-associated nuclear factor with transcriptional repressor properties, it may sequester nuclear NF-kappaB/RELA, lowering expression of its targets. This form is rapidely lost upon angiogenic or pro-inflammatory activation. This Pongo abelii (Sumatran orangutan) protein is Interleukin-33 (IL33).